Reading from the N-terminus, the 1792-residue chain is Eukaryotic translation initiation factor 4G (1792 aa).

Over residues 1-12 the composition is skewed to basic and acidic residues; that stretch reads MSQRGDRGEGHA. Disordered regions lie at residues 1-285, 424-446, 491-590, 612-659, 678-761, 874-912, 960-993, 999-1018, 1275-1299, 1407-1503, and 1537-1600; these read MSQR…PRPP, DSSG…TYGS, SPSM…PTPV, NSVP…EDLK, GVNK…NESH, VASE…EITR, SSSI…LDDW, MSTP…EANG, GERE…EERE, WQQR…HRTT, and ELSS…KLYS. Positions 21–42 are enriched in gly residues; it reads FGGGHRGGGGVGGAGKGGGGSS. Residues 88 to 107 are compositionally biased toward pro residues; it reads PLRPPAPQNAPAHVPVPAPR. Polar residues-rich tracts occupy residues 147–156 and 179–191; these read RISSTSTSQG and STMQ…SSAP. 3 stretches are compositionally biased toward low complexity: residues 216–243, 263–278, and 432–442; these read PQAP…PLQQ, PSQV…SVPN, and PSVQQQSQPVS. The span at 491-517 shows a compositional bias: polar residues; it reads SPSMNTGPGSNKDNLAGSTTSGHSQVT. Composition is skewed to basic and acidic residues over residues 545-564, 571-587, and 633-643; these read DVNK…KDNE, KSGE…EKHP, and DSNKNATKDTR. Over residues 644–654 the composition is skewed to polar residues; that stretch reads NLSQEPQSASS. The segment covering 699–718 has biased composition (low complexity); it reads AADASSIDRSSARSTSESTE. The segment covering 964-990 has biased composition (basic and acidic residues); it reads ADHELPDESSEKEVNMGEDEGKKKVEL. Residues 1018–1030 form an EIF4E-binding region; it reads GRKRYSRDFLLTL. Residues 1183 to 1406 form the MIF4G domain; it reads QRQLKAILNK…RDSIDLRKNK (224 aa). Residues 1278–1289 show a composition bias toward acidic residues; that stretch reads EEAEADKTEEEG. Basic and acidic residues-rich tracts occupy residues 1290-1299 and 1411-1432; these read EIKQTKEERE and RKVE…ERHA. Low complexity-rich tracts occupy residues 1439–1450 and 1461–1470; these read RGSVVGSGPRRG and SAAALASPSS. 2 stretches are compositionally biased toward basic and acidic residues: residues 1490-1503 and 1559-1572; these read IRFE…HRTT and AREE…DRSG. Over residues 1576–1593 the composition is skewed to polar residues; sequence PNTQFAGPSNRPASQEGR. The MI domain occupies 1603–1727; that stretch reads DLREKSISAI…SLQEVGTLIE (125 aa).

It belongs to the eukaryotic initiation factor 4G family. In terms of assembly, EIF4F is a multi-subunit complex, the composition of which varies with external and internal environmental conditions. It is composed of at least EIF4A, EIF4E and EIF4G. In higher plants two isoforms of EIF4F have been identified, named isoform EIF4F and isoform EIF(iso)4F. Isoform EIF4F has subunits p220 and p26, whereas isoform EIF(iso)4F has subunits p82 and p28.

Functionally, component of the protein complex eIF4F, which is involved in the recognition of the mRNA cap, ATP-dependent unwinding of 5'-terminal secondary structure and recruitment of mRNA to the ribosome. The polypeptide is Eukaryotic translation initiation factor 4G (Oryza sativa subsp. japonica (Rice)).